The chain runs to 174 residues: RNA pyrophosphohydrolase (174 aa).

A Nudix hydrolase domain is found at 6–149 (GFRANVGIII…KRDVYRKVMK (144 aa)). The short motif at 38–59 (GGVDDGESAEEAMYRELYEEVG) is the Nudix box element.

It belongs to the Nudix hydrolase family. RppH subfamily. A divalent metal cation serves as cofactor.

Functionally, accelerates the degradation of transcripts by removing pyrophosphate from the 5'-end of triphosphorylated RNA, leading to a more labile monophosphorylated state that can stimulate subsequent ribonuclease cleavage. The protein is RNA pyrophosphohydrolase of Shewanella sp. (strain W3-18-1).